Consider the following 350-residue polypeptide: Phenylalanine--tRNA ligase alpha subunit (350 aa).

Glu-271 serves as a coordination point for Mg(2+).

Belongs to the class-II aminoacyl-tRNA synthetase family. Phe-tRNA synthetase alpha subunit type 1 subfamily. Tetramer of two alpha and two beta subunits. The cofactor is Mg(2+).

Its subcellular location is the cytoplasm. It carries out the reaction tRNA(Phe) + L-phenylalanine + ATP = L-phenylalanyl-tRNA(Phe) + AMP + diphosphate + H(+). The sequence is that of Phenylalanine--tRNA ligase alpha subunit from Delftia acidovorans (strain DSM 14801 / SPH-1).